Reading from the N-terminus, the 380-residue chain is Cytochrome b (380 aa).

4 helical membrane-spanning segments follow: residues 34–54, 78–99, 114–134, and 179–199; these read FGSL…FLAM, WLLR…YFHI, WNIG…GYVL, and FFTF…INLL. Heme b contacts are provided by histidine 84 and histidine 98. A heme b-binding site is contributed by histidine 183. An a ubiquinone-binding site is contributed by histidine 202. 4 helical membrane passes run 227 to 247, 289 to 309, 321 to 341, and 348 to 368; these read YKDL…STFA, LGGV…PIIH, IAKT…WIGG, and FITI…LLIP.

It belongs to the cytochrome b family. As to quaternary structure, the cytochrome bc1 complex contains 3 respiratory subunits (MT-CYB, CYC1 and UQCRFS1), 2 core proteins (UQCRC1 and UQCRC2) and probably 6 low-molecular weight proteins. Heme b serves as cofactor.

It is found in the mitochondrion inner membrane. Component of the ubiquinol-cytochrome c reductase complex (complex III or cytochrome b-c1 complex) that is part of the mitochondrial respiratory chain. The b-c1 complex mediates electron transfer from ubiquinol to cytochrome c. Contributes to the generation of a proton gradient across the mitochondrial membrane that is then used for ATP synthesis. This Pelophylax plancyi (Korean pond frog) protein is Cytochrome b (mt-cyb).